Consider the following 161-residue polypeptide: Cell division protein SepF (161 aa).

The protein belongs to the SepF family. Homodimer. Interacts with FtsZ.

It localises to the cytoplasm. Its function is as follows. Cell division protein that is part of the divisome complex and is recruited early to the Z-ring. Probably stimulates Z-ring formation, perhaps through the cross-linking of FtsZ protofilaments. Its function overlaps with FtsA. The sequence is that of Cell division protein SepF from Finegoldia magna (strain ATCC 29328 / DSM 20472 / WAL 2508) (Peptostreptococcus magnus).